A 150-amino-acid polypeptide reads, in one-letter code: Protein-export protein SecB (150 aa).

This sequence belongs to the SecB family. In terms of assembly, homotetramer, a dimer of dimers. One homotetramer interacts with 1 SecA dimer.

It is found in the cytoplasm. Functionally, one of the proteins required for the normal export of preproteins out of the cell cytoplasm. It is a molecular chaperone that binds to a subset of precursor proteins, maintaining them in a translocation-competent state. It also specifically binds to its receptor SecA. This Polaromonas sp. (strain JS666 / ATCC BAA-500) protein is Protein-export protein SecB.